The chain runs to 30 residues: Cysteine-rich venom protein okinavin (30 aa).

The disordered stretch occupies residues 1 to 30 (SVDFDSESPRKPXIQNEIVDLHNPLRRXVN).

Belongs to the CRISP family. In terms of processing, contains 8 disulfide bonds. In terms of tissue distribution, expressed by the venom gland.

Its subcellular location is the secreted. In terms of biological role, inhibits calcium-activated potassium channels (KCa), voltage-gated potassium channel (Kv), and the calcium release channel/ryanodine receptor (RyR). The chain is Cysteine-rich venom protein okinavin from Ovophis okinavensis (Ryukyu Island pit viper).